Reading from the N-terminus, the 306-residue chain is Histone-lysine N-methyltransferase SETMAR (306 aa).

Positions 60–123 constitute a Pre-SET domain; that stretch reads PGCACLKTPC…RCRNRVVQWG (64 aa). Residues Cys-62, Cys-64, Cys-69, Cys-74, Cys-76, Cys-105, Cys-109, Cys-111, and Cys-115 each coordinate Zn(2+). Residues 126 to 250 form the SET domain; that stretch reads FHLQVFKTDH…PEEELSYDYS (125 aa). S-adenosyl-L-methionine-binding positions include 136–138, Tyr-179, Arg-207, and 210–211; these read KGW and NH. Residues Cys-213, Cys-274, Cys-276, and Cys-281 each contribute to the Zn(2+) site. The 17-residue stretch at 270–286 folds into the Post-SET domain; that stretch reads LRKPCYCGARSCAAFLP.

This sequence belongs to the class V-like SAM-binding methyltransferase superfamily.

The protein localises to the nucleus. It localises to the chromosome. The enzyme catalyses L-lysyl(36)-[histone H3] + 2 S-adenosyl-L-methionine = N(6),N(6)-dimethyl-L-lysyl(36)-[histone H3] + 2 S-adenosyl-L-homocysteine + 2 H(+). In terms of biological role, histone methyltransferase that methylates 'Lys-4' and 'Lys-36' of histone H3, 2 specific tags for epigenetic transcriptional activation. Specifically mediates dimethylation of H3 'Lys-36'. In Bos taurus (Bovine), this protein is Histone-lysine N-methyltransferase SETMAR.